The primary structure comprises 165 residues: 5-formyltetrahydrofolate cyclo-ligase (165 aa).

4–8 (KNSLR) serves as a coordination point for ATP. Substrate is bound by residues isoleucine 51 and glutamate 56. 116 to 124 (RIGFGKGYY) is an ATP binding site. Aspartate 125 provides a ligand contact to Mg(2+). Positions 126 and 154 each coordinate ATP. Aspartate 155 is a binding site for Mg(2+).

It belongs to the 5-formyltetrahydrofolate cyclo-ligase family. In terms of assembly, monomer or homodimer. The cofactor is Mg(2+).

The protein localises to the cytoplasm. The catalysed reaction is (6S)-5-formyl-5,6,7,8-tetrahydrofolate + ATP = (6R)-5,10-methenyltetrahydrofolate + ADP + phosphate. Involved in folate metabolism. Catalyzes the irreversible conversion of 5-formyltetrahydrofolate (5-FTHF) to yield 5,10-methenyltetrahydrofolate. This is 5-formyltetrahydrofolate cyclo-ligase from Mycoplasma genitalium (strain ATCC 33530 / DSM 19775 / NCTC 10195 / G37) (Mycoplasmoides genitalium).